Here is a 167-residue protein sequence, read N- to C-terminus: Transmembrane protein 229B (167 aa).

Residues 1 to 14 lie on the Cytoplasmic side of the membrane; that stretch reads MASAEPLTALSRWY. A helical membrane pass occupies residues 15 to 35; that stretch reads LYAIHGYFCEVMFTAAWEFVV. Over 36-40 the chain is Extracellular; that stretch reads NFNWK. The chain crosses the membrane as a helical span at residues 41-61; the sequence is FPGVTSVWALFIYGTSILIVE. Residues 62-73 are Cytoplasmic-facing; the sequence is RMYLRLRGRCPL. Residues 74 to 94 form a helical membrane-spanning segment; that stretch reads LLRCLIYTLWTYLWEFTTGFI. Topologically, residues 95-111 are extracellular; that stretch reads LRQFNACPWDYSQFDFD. A helical transmembrane segment spans residues 112–132; that stretch reads FMGLITLEYAVPWFCGALLVE. Residues 133–167 are Cytoplasmic-facing; the sequence is QFVIRNTLRLRFDKDAEPGEPSGALALANGHVKTD.

It belongs to the TMEM229 family.

It localises to the membrane. The sequence is that of Transmembrane protein 229B (TMEM229B) from Bos taurus (Bovine).